We begin with the raw amino-acid sequence, 474 residues long: Chromosomal replication initiator protein DnaA (474 aa).

The tract at residues 1–73 is domain I, interacts with DnaA modulators; that stretch reads MTNIEQERWS…LSCWQAEMPE (73 aa). Positions 73–130 are domain II; it reads EVHRIDLTVRTAMRCAAPAKEQAAPIEPRREDNRAAAHDLRVSATAPVSANHEALGGS. Residues 131–353 are domain III, AAA+ region; the sequence is PLDPRLTFSS…GAINRLLAHS (223 aa). ATP contacts are provided by glycine 178, glycine 180, lysine 181, and threonine 182. Positions 354–474 are domain IV, binds dsDNA; it reads KLNAQPVTLE…VESLKRQLQE (121 aa).

Belongs to the DnaA family. In terms of assembly, oligomerizes as a right-handed, spiral filament on DNA at oriC.

Its subcellular location is the cytoplasm. Plays an essential role in the initiation and regulation of chromosomal replication. ATP-DnaA binds to the origin of replication (oriC) to initiate formation of the DNA replication initiation complex once per cell cycle. Binds the DnaA box (a 9 base pair repeat at the origin) and separates the double-stranded (ds)DNA. Forms a right-handed helical filament on oriC DNA; dsDNA binds to the exterior of the filament while single-stranded (ss)DNA is stabiized in the filament's interior. The ATP-DnaA-oriC complex binds and stabilizes one strand of the AT-rich DNA unwinding element (DUE), permitting loading of DNA polymerase. After initiation quickly degrades to an ADP-DnaA complex that is not apt for DNA replication. Binds acidic phospholipids. The protein is Chromosomal replication initiator protein DnaA of Rhodopseudomonas palustris (strain BisA53).